Reading from the N-terminus, the 479-residue chain is MDETSPLVSPERAQPPEYTFPSGSGAHFPQVPGGAVRVAAAAGSGPSPPCSPGHDRERQPLLDRARGAAAQGQTHTVAVQAQALAAQAAVAAHAVQTHRERNDFPEDPEFEVVVRQAEVAIECSIYPERIYQGSSGSYFVKDSQGRIVAVFKPKNEEPYGHLNPKWTKWLQKLCCPCCFGRDCLVLNQGYLSEAGASLVDQKLELNIVPRTKVVYLASETFNYSAIDRVKSRGKRLALEKVPKVGQRFNRIGLPPKVGSFQLFVEGYKDADYWLRRFEAEPLPENTNRQLLLQFERLVVLDYIIRNTDRGNDNWLIKYDCPMDNSSCRDTDWVMVREPVIKVAAIDNGLAFPLKHPDSWRAYPFYWAWLPQAKVPFSQEIKDLILPKISDPNFIKDLEEDLYELFKRDPGFDRGQFHKQIAVMRGQILNLTQALKDNKSPLHLVQMPPVIVETARSHQRSASESYTQSFQSRKPFFSWW.

The residue at position 1 (M1) is an N-acetylmethionine. The disordered stretch occupies residues 1–58 (MDETSPLVSPERAQPPEYTFPSGSGAHFPQVPGGAVRVAAAAGSGPSPPCSPGHDRER). S5, S9, S44, S47, and S51 each carry phosphoserine. Residues 31–45 (VPGGAVRVAAAAGSG) are compositionally biased toward low complexity. The PI3K/PI4K catalytic domain maps to 124-453 (SIYPERIYQG…VQMPPVIVET (330 aa)). A G-loop region spans residues 130-136 (IYQGSSG). ATP contacts are provided by residues 131-137 (YQGSSGS) and K152. The tract at residues 157-159 (EPY) is important for substrate binding. Residues 165–178 (KWTKWLQKLCCPCC) form an important for interaction with membranes region. 4 S-palmitoyl cysteine lipidation sites follow: C174, C175, C177, and C178. 261 to 264 (QLFV) contributes to the ATP binding site. The important for interaction with membranes stretch occupies residues 268 to 276 (KDADYWLRR). A catalytic loop region spans residues 305–313 (RNTDRGNDN). Residues 344–364 (AIDNGLAFPLKHPDSWRAYPF) are activation loop. D346 contacts ATP. Residues 359–368 (WRAYPFYWAW) form an important for interaction with membranes region. S462 carries the post-translational modification Phosphoserine.

It belongs to the PI3/PI4-kinase family. Type II PI4K subfamily. Associates with the BLOC-1 and the AP-3 complexes; the BLOC-1 complex is required for optimal binding of PI4K2A to the AP-3 complex. Interacts with BLOC1S5 and DTNBP1. Interacts with ITCH. Interacts with FOS; this interaction may enhance phosphatidylinositol phosphorylation activity. Interacts with ATG9A. In terms of processing, palmitoylated by ZDHHC3 and ZDHHC7 in the CCPCC motif. Palmitoylation is cholesterol-dependent, and required for TGN localization. Ubiquitinated by ITCH; this does not lead to proteasomal degradation. As to expression, detected in brain (at protein level).

The protein localises to the golgi apparatus. Its subcellular location is the trans-Golgi network membrane. It is found in the membrane raft. It localises to the endosome. The protein resides in the endosome membrane. The protein localises to the cytoplasmic vesicle. Its subcellular location is the cell projection. It is found in the dendrite. It localises to the presynaptic cell membrane. The protein resides in the synapse. The protein localises to the synaptosome. Its subcellular location is the mitochondrion. It is found in the membrane. It localises to the cell membrane. The protein resides in the perikaryon. The protein localises to the neuron projection. The catalysed reaction is a 1,2-diacyl-sn-glycero-3-phospho-(1D-myo-inositol) + ATP = a 1,2-diacyl-sn-glycero-3-phospho-(1D-myo-inositol 4-phosphate) + ADP + H(+). In terms of biological role, membrane-bound phosphatidylinositol-4 kinase (PI4-kinase) that catalyzes the phosphorylation of phosphatidylinositol (PI) to phosphatidylinositol 4-phosphate (PI4P), a lipid that plays important roles in endocytosis, Golgi function, protein sorting and membrane trafficking and is required for prolonged survival of neurons. Besides, phosphorylation of phosphatidylinositol (PI) to phosphatidylinositol 4-phosphate (PI4P) is the first committed step in the generation of phosphatidylinositol 4,5-bisphosphate (PIP2), a precursor of the second messenger inositol 1,4,5-trisphosphate (InsP3). The sequence is that of Phosphatidylinositol 4-kinase type 2-alpha (Pi4k2a) from Mus musculus (Mouse).